The chain runs to 212 residues: Glycerol-3-phosphate acyltransferase (212 aa).

The next 5 helical transmembrane spans lie at 3–23 (LILLIIAAYLLGSIPTGLWIG), 69–89 (LLPMWLGVTHISPLLFGFFAI), 110–130 (AGILLGFAPFYLIFLLFIFFF), 143–163 (VIAASIAIITVLIFPALHFLL), and 165–185 (DYDFLFVLIVISAGSLIIIRH).

This sequence belongs to the PlsY family. As to quaternary structure, probably interacts with PlsX.

The protein resides in the cell membrane. It catalyses the reaction an acyl phosphate + sn-glycerol 3-phosphate = a 1-acyl-sn-glycero-3-phosphate + phosphate. It functions in the pathway lipid metabolism; phospholipid metabolism. Functionally, catalyzes the transfer of an acyl group from acyl-phosphate (acyl-PO(4)) to glycerol-3-phosphate (G3P) to form lysophosphatidic acid (LPA). This enzyme utilizes acyl-phosphate as fatty acyl donor, but not acyl-CoA or acyl-ACP. This is Glycerol-3-phosphate acyltransferase from Streptococcus mutans serotype c (strain ATCC 700610 / UA159).